Here is a 24-residue protein sequence, read N- to C-terminus: Major pollen allergen Ole e 4 (24 aa).

It belongs to the glycosyl hydrolase 17 family. Post-translationally, the N-terminus is blocked.

The chain is Major pollen allergen Ole e 4 from Olea europaea (Common olive).